Here is a 151-residue protein sequence, read N- to C-terminus: Phospholipase A2 inhibitor BjussuMIP (151 aa).

An N-terminal signal peptide occupies residues 1–4 (LANG). A C-type lectin domain is found at 31 to 146 (LKYAFLTVHK…CDENLLVVCE (116 aa)). Cystine bridges form between C68/C145 and C123/C137. N107 carries N-linked (GlcNAc...) asparagine glycosylation.

Belongs to the alpha-type phospholipase A2 inhibitor family. In terms of assembly, oligomer. In terms of tissue distribution, expressed by the liver.

The protein localises to the secreted. Inhibits enzymatic, anticoagulant, edema formation, myotoxicity activities induced by snakes phospholipase A2. Is oligomeric, but it is probable that each of its subunits can bind and inactive a PLA2 molecule. This chain is Phospholipase A2 inhibitor BjussuMIP, found in Bothrops jararacussu (Jararacussu).